The primary structure comprises 73 residues: Large ribosomal subunit protein bL31 (73 aa).

Zn(2+)-binding residues include C16, C18, C37, and C40.

The protein belongs to the bacterial ribosomal protein bL31 family. Type A subfamily. As to quaternary structure, part of the 50S ribosomal subunit. It depends on Zn(2+) as a cofactor.

Its function is as follows. Binds the 23S rRNA. This chain is Large ribosomal subunit protein bL31, found in Blochmanniella floridana.